A 416-amino-acid chain; its full sequence is Olfactomedin-like protein 3 (416 aa).

The N-terminal stretch at 1–18 (MAGIVACILLVFVTVITA) is a signal peptide. Residues 48–129 (RYSGELRDFK…KKKEKYEKIT (82 aa)) are a coiled coil. The Olfactomedin-like domain occupies 155-411 (YCSDTISQVT…QMLYKLNMKH (257 aa)). C156 and C338 form a disulfide bridge. N-linked (GlcNAc...) asparagine glycans are attached at residues N198 and N258.

It belongs to the OLFML3 family. As to quaternary structure, interacts (via coiled coil domain) with BMP1 and (via olfactomedin-like domain) CHRD.

Its subcellular location is the secreted. In terms of biological role, secreted scaffold protein that plays an essential role in dorsoventral patterning during early development. Stabilizes axial formation by restricting chordin (CHRD) activity on the dorsal side. Acts by facilitating the association between the tolloid protease BMP1 and its substrate chordin (CHRD), leading to enhance chordin (CHRD) degradation by BMP1. The sequence is that of Olfactomedin-like protein 3 (olfml3) from Xenopus tropicalis (Western clawed frog).